The chain runs to 160 residues: Transcription elongation factor GreA (160 aa).

Residues 49–73 (HAAKEEQSHNEGRIADLEDKLARAD) are a coiled coil.

Belongs to the GreA/GreB family.

Its function is as follows. Necessary for efficient RNA polymerase transcription elongation past template-encoded arresting sites. The arresting sites in DNA have the property of trapping a certain fraction of elongating RNA polymerases that pass through, resulting in locked ternary complexes. Cleavage of the nascent transcript by cleavage factors such as GreA or GreB allows the resumption of elongation from the new 3'terminus. GreA releases sequences of 2 to 3 nucleotides. The chain is Transcription elongation factor GreA from Rhodopseudomonas palustris (strain BisA53).